The primary structure comprises 346 residues: UDP-N-acetylenolpyruvoylglucosamine reductase (346 aa).

Residues 18–189 enclose the FAD-binding PCMH-type domain; it reads LRAQARAFIA…VSVVFALKTH (172 aa). R165 is a catalytic residue. The active-site Proton donor is S240. E336 is an active-site residue.

It belongs to the MurB family. FAD is required as a cofactor.

It is found in the cytoplasm. It carries out the reaction UDP-N-acetyl-alpha-D-muramate + NADP(+) = UDP-N-acetyl-3-O-(1-carboxyvinyl)-alpha-D-glucosamine + NADPH + H(+). Its pathway is cell wall biogenesis; peptidoglycan biosynthesis. Its function is as follows. Cell wall formation. The protein is UDP-N-acetylenolpyruvoylglucosamine reductase of Neisseria meningitidis serogroup B (strain ATCC BAA-335 / MC58).